A 768-amino-acid polypeptide reads, in one-letter code: MAGFGNFTENGSEFVFTGTQTPRPMLNYIWNPRILSGVNHFGGGDGAYGARSAAYIDPEGRGRSSLFRGGNRYFYIRDAETGEFWNPGWYPVKRTLDRYSCTHGLGYTRLEGAYGGIAAGARVFVNAEDPVEIWTVTLTNESPREREIKVYSFVEFSLEGYARYSEYNSYVYCDYLAEDDIIVAHNHAQERPHEWFDGFAAASVKPTGYETGKRAFLGNYGDTDSPGSVVRGACSNSLAACEDMVGVLEHTFTLKPGEEVTYHTLWGAADGNETARELTRKLLAPGRIEDDFARLLAEKTAMTEDIAVQTPLAKVNHITNMWVKQQVLLCAEAGRATGKGFRDQLQDAWAVSAFLPGLAKEKIRETLKYQYKDGKCVRGWLPLDPHIYSDGPVWIAPTVNAYLKETGDYAFLQEQVPYLDEGAGTVWEHMLTAVRYSSGDLGEHSLVLAHDGDWNDSLNGIGTGGKGESVWTSIALYHALNETAELAREVIRDEGLARELLELAVRIKEAVNANGWDGDWYLAAYNDHGEKVGSHTEQEGSIYLNSQTWAVMSGLAEGERAGQCLQAVDNKLDSPYGPLTLSPPYTEYNASIGRLTGFVPGIWENGTPYCHGGTFKIVADCVAGRGNEAFDTYSKILPDSAANPSDHSGCEPYAFTNMYFGPANPRAGETAFAWVTGTAGWMFRAVTQYMLGFYPGYDSIRIRPCIPEDWEECSMKRVYRGDTYLLTIRNKNREQCGLKRLTIDGKEIAGDVFPIFGDGLTHTVEVDM.

The active-site Proton donor is the Asp456.

The protein belongs to the glycosyl hydrolase 94 family.

It catalyses the reaction solabiose + phosphate = D-galactose + alpha-D-glucose 1-phosphate. Its function is as follows. Catalyzes the reversible phosphorolysis of solabiose. Catalyzes the phosphorolysis and synthesis of solabiose through a sequential bi-bi mechanism involving the formation of a ternary complex. Is probably involved in the metabolism of solabiose released from solabiose-containing compounds. This chain is Solabiose phosphorylase, found in Paenibacillus borealis.